Consider the following 388-residue polypeptide: Riboflavin biosynthesis protein RibBA (388 aa).

The segment at 1 to 186 is DHBP synthase; the sequence is MEELREAFEE…MDDVWREFVK (186 aa). D-ribulose 5-phosphate contacts are provided by residues 21–22, Asp26, 125–129, and Glu149; these read RE and RKGHT. A Mg(2+)-binding site is contributed by Glu22. A Mg(2+)-binding site is contributed by His128. Residues 187–388 are GTP cyclohydrolase II; sequence RKLLMKKKAE…LEEIFREVNS (202 aa). 235 to 239 lines the GTP pocket; that stretch reads RIHSE. Positions 240, 251, and 253 each coordinate Zn(2+). Residues Gln256, 277 to 279, and Thr299 contribute to the GTP site; that span reads EGR. Asp311 acts as the Proton acceptor; for GTP cyclohydrolase activity in catalysis. Arg313 functions as the Nucleophile; for GTP cyclohydrolase activity in the catalytic mechanism. Positions 334 and 339 each coordinate GTP.

It in the N-terminal section; belongs to the DHBP synthase family. This sequence in the C-terminal section; belongs to the GTP cyclohydrolase II family. It depends on Mg(2+) as a cofactor. Mn(2+) is required as a cofactor. The cofactor is Zn(2+).

The catalysed reaction is D-ribulose 5-phosphate = (2S)-2-hydroxy-3-oxobutyl phosphate + formate + H(+). The enzyme catalyses GTP + 4 H2O = 2,5-diamino-6-hydroxy-4-(5-phosphoribosylamino)-pyrimidine + formate + 2 phosphate + 3 H(+). The protein operates within cofactor biosynthesis; riboflavin biosynthesis; 2-hydroxy-3-oxobutyl phosphate from D-ribulose 5-phosphate: step 1/1. Its pathway is cofactor biosynthesis; riboflavin biosynthesis; 5-amino-6-(D-ribitylamino)uracil from GTP: step 1/4. Catalyzes the conversion of D-ribulose 5-phosphate to formate and 3,4-dihydroxy-2-butanone 4-phosphate. Its function is as follows. Catalyzes the conversion of GTP to 2,5-diamino-6-ribosylamino-4(3H)-pyrimidinone 5'-phosphate (DARP), formate and pyrophosphate. The sequence is that of Riboflavin biosynthesis protein RibBA from Thermotoga maritima (strain ATCC 43589 / DSM 3109 / JCM 10099 / NBRC 100826 / MSB8).